The primary structure comprises 533 residues: 2,3-bisphosphoglycerate-independent phosphoglycerate mutase (533 aa).

Residues Asp-15 and Ser-65 each coordinate Mn(2+). The active-site Phosphoserine intermediate is Ser-65. Residues His-126, 156–157 (RD), Arg-188, Arg-194, 258–261 (RPDR), and Lys-331 each bind substrate. Residues Asp-398, His-402, Asp-439, His-440, and His-457 each contribute to the Mn(2+) site.

This sequence belongs to the BPG-independent phosphoglycerate mutase family. As to quaternary structure, monomer. Mn(2+) serves as cofactor.

The enzyme catalyses (2R)-2-phosphoglycerate = (2R)-3-phosphoglycerate. It functions in the pathway carbohydrate degradation; glycolysis; pyruvate from D-glyceraldehyde 3-phosphate: step 3/5. Its function is as follows. Catalyzes the interconversion of 2-phosphoglycerate and 3-phosphoglycerate. This is 2,3-bisphosphoglycerate-independent phosphoglycerate mutase from Trichormus variabilis (strain ATCC 29413 / PCC 7937) (Anabaena variabilis).